Here is a 616-residue protein sequence, read N- to C-terminus: Dihydroxy-acid dehydratase (616 aa).

D81 provides a ligand contact to Mg(2+). C122 is a binding site for [2Fe-2S] cluster. Mg(2+) is bound by residues D123 and K124. N6-carboxylysine is present on K124. C195 contacts [2Fe-2S] cluster. Mg(2+) is bound at residue E491. S517 (proton acceptor) is an active-site residue.

The protein belongs to the IlvD/Edd family. As to quaternary structure, homodimer. Requires [2Fe-2S] cluster as cofactor. The cofactor is Mg(2+).

The catalysed reaction is (2R)-2,3-dihydroxy-3-methylbutanoate = 3-methyl-2-oxobutanoate + H2O. It carries out the reaction (2R,3R)-2,3-dihydroxy-3-methylpentanoate = (S)-3-methyl-2-oxopentanoate + H2O. It functions in the pathway amino-acid biosynthesis; L-isoleucine biosynthesis; L-isoleucine from 2-oxobutanoate: step 3/4. It participates in amino-acid biosynthesis; L-valine biosynthesis; L-valine from pyruvate: step 3/4. In terms of biological role, functions in the biosynthesis of branched-chain amino acids. Catalyzes the dehydration of (2R,3R)-2,3-dihydroxy-3-methylpentanoate (2,3-dihydroxy-3-methylvalerate) into 2-oxo-3-methylpentanoate (2-oxo-3-methylvalerate) and of (2R)-2,3-dihydroxy-3-methylbutanoate (2,3-dihydroxyisovalerate) into 2-oxo-3-methylbutanoate (2-oxoisovalerate), the penultimate precursor to L-isoleucine and L-valine, respectively. This Salmonella gallinarum (strain 287/91 / NCTC 13346) protein is Dihydroxy-acid dehydratase.